The chain runs to 173 residues: Translation initiation factor IF-3 (173 aa).

It belongs to the IF-3 family. In terms of assembly, monomer.

The protein localises to the cytoplasm. Its function is as follows. IF-3 binds to the 30S ribosomal subunit and shifts the equilibrium between 70S ribosomes and their 50S and 30S subunits in favor of the free subunits, thus enhancing the availability of 30S subunits on which protein synthesis initiation begins. The polypeptide is Translation initiation factor IF-3 (Bartonella bacilliformis (strain ATCC 35685 / KC583 / Herrer 020/F12,63)).